The following is a 155-amino-acid chain: MEFEAEHEGLTASWVAPAPQGGKGAEGRAGVADEAGHGKTEAECAEDGEKCGDAEMSALDRVQRDHGDKHTESTSRKRIEAKYMDLLVEAERENKNLRKKYNIILDVSTKILVFGTCIMFATGTLIGKGTKIQVPVCNSTNLALAFLAGFLTRHV.

Residues 1-50 (MEFEAEHEGLTASWVAPAPQGGKGAEGRAGVADEAGHGKTEAECAEDGEK) are disordered. Over residues 34-50 (EAGHGKTEAECAEDGEK) the composition is skewed to basic and acidic residues. Residues 76-107 (RKRIEAKYMDLLVEAERENKNLRKKYNIILDV) adopt a coiled-coil conformation.

The sequence is that of Phosphoprotein pp24 (MDV008) from Gallus gallus (Chicken).